A 62-amino-acid polypeptide reads, in one-letter code: Small ribosomal subunit protein eS27 (62 aa).

Zn(2+) contacts are provided by cysteine 17, cysteine 20, cysteine 36, and cysteine 39. The segment at 17 to 39 (CPDCENEQTIFDRACTPVDCIVC) adopts a C4-type zinc-finger fold.

Belongs to the eukaryotic ribosomal protein eS27 family. In terms of assembly, part of the 30S ribosomal subunit. Zn(2+) serves as cofactor.

This Methanospirillum hungatei JF-1 (strain ATCC 27890 / DSM 864 / NBRC 100397 / JF-1) protein is Small ribosomal subunit protein eS27.